Here is a 103-residue protein sequence, read N- to C-terminus: Nucleoid-associated protein NIS_0256 (103 aa).

It belongs to the YbaB/EbfC family. Homodimer.

The protein resides in the cytoplasm. The protein localises to the nucleoid. Binds to DNA and alters its conformation. May be involved in regulation of gene expression, nucleoid organization and DNA protection. The protein is Nucleoid-associated protein NIS_0256 of Nitratiruptor sp. (strain SB155-2).